The chain runs to 166 residues: MNKINLKNFYLNLVIILVVFIFDRTTKLYILKLAEVETSVDIYITPFLNLFLIWNKGIAFGLFSIDGSVIYNSITILIGLIIIAIIFMMLKNDNIQRYFFALIAGGAFGNFYDRIVYTAVPDFIDLHFYGFHWFVFNVADIFITIGVFCLILVELFFNNKKTNEKN.

4 helical membrane passes run 11-31 (LNLV…LYIL), 42-62 (IYIT…AFGL), 69-89 (VIYN…IFMM), and 99-119 (FFAL…VYTA). Active-site residues include Asp122 and Asp140. The chain crosses the membrane as a helical span at residues 133-153 (WFVFNVADIFITIGVFCLILV).

It belongs to the peptidase A8 family.

The protein localises to the cell inner membrane. The catalysed reaction is Release of signal peptides from bacterial membrane prolipoproteins. Hydrolyzes -Xaa-Yaa-Zaa-|-(S,diacylglyceryl)Cys-, in which Xaa is hydrophobic (preferably Leu), and Yaa (Ala or Ser) and Zaa (Gly or Ala) have small, neutral side chains.. The protein operates within protein modification; lipoprotein biosynthesis (signal peptide cleavage). In terms of biological role, this protein specifically catalyzes the removal of signal peptides from prolipoproteins. This chain is Lipoprotein signal peptidase, found in Pelagibacter ubique (strain HTCC1062).